A 537-amino-acid polypeptide reads, in one-letter code: Putative cysteine ligase BshC (537 aa).

A coiled-coil region spans residues 415–439 (EKASNNFINEVEEMKIQQQELYNNL).

The protein belongs to the BshC family.

Involved in bacillithiol (BSH) biosynthesis. May catalyze the last step of the pathway, the addition of cysteine to glucosamine malate (GlcN-Mal) to generate BSH. The sequence is that of Putative cysteine ligase BshC from Staphylococcus epidermidis (strain ATCC 12228 / FDA PCI 1200).